The following is a 140-amino-acid chain: Putative esterase SSO2140 (140 aa).

This sequence belongs to the thioesterase PaaI family.

This is Putative esterase SSO2140 from Saccharolobus solfataricus (strain ATCC 35092 / DSM 1617 / JCM 11322 / P2) (Sulfolobus solfataricus).